The following is a 1041-amino-acid chain: Beta-galactosidase (1041 aa).

2 residues coordinate substrate: Asn-103 and Asp-201. Residue Asp-201 coordinates Na(+). Mg(2+)-binding residues include Glu-415, His-417, and Glu-460. Residues Glu-460 and 536–539 (EYAH) each bind substrate. The active-site Proton donor is Glu-460. The active-site Nucleophile is Glu-536. Residue Asn-596 participates in Mg(2+) binding. Residues Phe-600 and Asn-603 each contribute to the Na(+) site. Substrate is bound by residues Asn-603 and Trp-1016.

The protein belongs to the glycosyl hydrolase 2 family. As to quaternary structure, homotetramer. The cofactor is Mg(2+). It depends on Na(+) as a cofactor.

It carries out the reaction Hydrolysis of terminal non-reducing beta-D-galactose residues in beta-D-galactosides.. This chain is Beta-galactosidase, found in Alteromonas mediterranea (strain DSM 17117 / CIP 110805 / LMG 28347 / Deep ecotype).